The following is a 1136-amino-acid chain: Carbamoyl phosphate synthase large chain (1136 aa).

The interval 1-402 (MPKRTDIKSV…SLGKAMRSID (402 aa)) is carboxyphosphate synthetic domain. Arg-129, Arg-169, Gly-175, Gly-176, Glu-208, Ile-210, Glu-215, Gly-241, Val-242, His-243, Gln-285, and Glu-299 together coordinate ATP. The ATP-grasp 1 domain occupies 133–328 (KKVVKEAGAE…IAKIATKLAL (196 aa)). 3 residues coordinate Mg(2+): Gln-285, Glu-299, and Asn-301. Residues Gln-285, Glu-299, and Asn-301 each contribute to the Mn(2+) site. Positions 403 to 551 (KRHMGFSWDG…YYYSCYADET (149 aa)) are oligomerization domain. The carbamoyl phosphate synthetic domain stretch occupies residues 552–962 (ELRKREREAV…AFAKSQLASY (411 aa)). The region spanning 681-881 (GEVLRQEHLN…LAKAAARIMA (201 aa)) is the ATP-grasp 2 domain. 10 residues coordinate ATP: Arg-717, Lys-765, Leu-767, Glu-772, Gly-797, Val-798, His-799, Ser-800, Gln-840, and Glu-852. Mg(2+) is bound by residues Gln-840, Glu-852, and Asn-854. Mn(2+) contacts are provided by Gln-840, Glu-852, and Asn-854. The allosteric domain stretch occupies residues 963–1136 (EGGLPTNGNV…KEEGEEARAQ (174 aa)). The MGS-like domain occupies 964 to 1122 (GGLPTNGNVF…QEHSRELYEL (159 aa)).

It belongs to the CarB family. As to quaternary structure, composed of two chains; the small (or glutamine) chain promotes the hydrolysis of glutamine to ammonia, which is used by the large (or ammonia) chain to synthesize carbamoyl phosphate. Tetramer of heterodimers (alpha,beta)4. Requires Mg(2+) as cofactor. Mn(2+) serves as cofactor.

The catalysed reaction is hydrogencarbonate + L-glutamine + 2 ATP + H2O = carbamoyl phosphate + L-glutamate + 2 ADP + phosphate + 2 H(+). The enzyme catalyses hydrogencarbonate + NH4(+) + 2 ATP = carbamoyl phosphate + 2 ADP + phosphate + 2 H(+). It participates in amino-acid biosynthesis; L-arginine biosynthesis; carbamoyl phosphate from bicarbonate: step 1/1. It functions in the pathway pyrimidine metabolism; UMP biosynthesis via de novo pathway; (S)-dihydroorotate from bicarbonate: step 1/3. Large subunit of the glutamine-dependent carbamoyl phosphate synthetase (CPSase). CPSase catalyzes the formation of carbamoyl phosphate from the ammonia moiety of glutamine, carbonate, and phosphate donated by ATP, constituting the first step of 2 biosynthetic pathways, one leading to arginine and/or urea and the other to pyrimidine nucleotides. The large subunit (synthetase) binds the substrates ammonia (free or transferred from glutamine from the small subunit), hydrogencarbonate and ATP and carries out an ATP-coupled ligase reaction, activating hydrogencarbonate by forming carboxy phosphate which reacts with ammonia to form carbamoyl phosphate. The protein is Carbamoyl phosphate synthase large chain of Bifidobacterium animalis subsp. lactis (strain AD011).